Here is a 758-residue protein sequence, read N- to C-terminus: Zinc finger protein VAR3, chloroplastic (758 aa).

Positions 122–502 are 3 X approximate repeat; that stretch reads FPGFPDELLR…PKEETQIGLI (381 aa). RanBP2-type zinc fingers lie at residues 276 to 305 and 308 to 338; these read KRGD…ARPK and LTGS…KRPR. Repeat unit 1 spans residues 368–415; sequence RWLSKVAQGGSDANSVDTDEDFPEIMPLRKGVNRYVVSTRKPPLERRL. Disordered regions lie at residues 410–470, 512–545, 572–606, 629–654, and 727–758; these read PLER…RFES, GGNQ…SEEP, EKMP…DSDF, TLPA…INKS, and KRKT…KGDK. 3 stretches are compositionally biased toward basic and acidic residues: residues 457–469, 519–545, and 572–581; these read RSDD…RRFE, QEDK…SEEP, and EKMPMRKGEN. Repeat 2 spans residues 547–596; it reads RWFKRVTELHNVSDLESAIPQEISPEKMPMRKGENRFVVSRKKDRSLTSP. The stretch at 688 to 736 is repeat 3; sequence RWFKRVAEIKNISELSEIPDEDFPSIMPMRKGVNRFVVSKRKTPLERRL.

As to quaternary structure, interacts in vitro with the chloroplast-located protein CCD4/NCED4. Homodimer. Interacts with ORRM1. Interacts with PCMP-H51/CRR28 and PCMP-H12/OTP82. Interacts with ORRM6. Weakly expressed in leaves and roots.

It localises to the plastid. The protein resides in the chloroplast. Its function is as follows. Probable component of some protein complex required for chloroplast and palisade cell development. Involved in C-to-U editing of chloroplastic RNA. Controls a large number of chloroplastic editing sites. Binds the editing recognition trans-factors PCMP-H51/CRR28 and PCMP-H12/OTP82. The polypeptide is Zinc finger protein VAR3, chloroplastic (Arabidopsis thaliana (Mouse-ear cress)).